The chain runs to 160 residues: Small ribosomal subunit protein uS10m (160 aa).

The protein belongs to the universal ribosomal protein uS10 family. Component of the mitochondrial ribosome small subunit (28S) which comprises a 12S rRNA and about 30 distinct proteins.

The protein resides in the mitochondrion. In Mus musculus (Mouse), this protein is Small ribosomal subunit protein uS10m (Mrps10).